The following is a 357-amino-acid chain: 3-dehydroquinate synthase (357 aa).

Residues 104–108, 128–129, lysine 141, and 168–171 contribute to the NAD(+) site; these read GVVGD, TT, and FLET. Zn(2+) contacts are provided by glutamate 183, histidine 243, and histidine 260.

Belongs to the sugar phosphate cyclases superfamily. Dehydroquinate synthase family. Co(2+) is required as a cofactor. Requires Zn(2+) as cofactor. It depends on NAD(+) as a cofactor.

Its subcellular location is the cytoplasm. It catalyses the reaction 7-phospho-2-dehydro-3-deoxy-D-arabino-heptonate = 3-dehydroquinate + phosphate. Its pathway is metabolic intermediate biosynthesis; chorismate biosynthesis; chorismate from D-erythrose 4-phosphate and phosphoenolpyruvate: step 2/7. Its function is as follows. Catalyzes the conversion of 3-deoxy-D-arabino-heptulosonate 7-phosphate (DAHP) to dehydroquinate (DHQ). The polypeptide is 3-dehydroquinate synthase (Streptococcus pyogenes serotype M5 (strain Manfredo)).